A 1840-amino-acid polypeptide reads, in one-letter code: Collagen alpha-1(V) chain (1840 aa).

Residues methionine 1 to alanine 36 form the signal peptide. A Laminin G-like domain is found at aspartate 72–cysteine 244. The nonhelical region stretch occupies residues arginine 231 to glutamate 445. A sulfotyrosine mark is found at tyrosine 234, tyrosine 236, tyrosine 240, tyrosine 262, tyrosine 263, and tyrosine 271. Disordered stretches follow at residues proline 242–methionine 523, phenylalanine 528–glutamine 547, and glycine 561–glutamine 1576. Over residues asparagine 258–glycine 268 the composition is skewed to acidic residues. Composition is skewed to low complexity over residues aspartate 335–aspartate 352 and threonine 376–asparagine 386. The segment at glycine 446–arginine 560 is interrupted collagenous region. The segment covering proline 472–threonine 487 has biased composition (pro residues). A compositionally biased stretch (low complexity) spans leucine 508 to methionine 523. Over residues glycine 561–proline 572 the composition is skewed to low complexity. Residues glycine 561–glycine 1572 are triple-helical region. 3 positions are modified to 4-hydroxyproline: proline 572, proline 578, and proline 623. Lysine 629 carries the post-translational modification 5-hydroxylysine. Proline 641 carries the 4-hydroxyproline modification. Position 644 is a 5-hydroxylysine (lysine 644). Residues proline 650, proline 656, proline 659, proline 677, and proline 680 each carry the 4-hydroxyproline modification. A compositionally biased stretch (low complexity) spans proline 673–proline 688. 3-hydroxyproline is present on residues proline 682 and proline 688. Residues lysine 689–proline 698 show a composition bias toward pro residues. A 4-hydroxyproline mark is found at proline 692, proline 698, and proline 707. Lysine 710 carries the 5-hydroxylysine modification. A 4-hydroxyproline mark is found at proline 719, proline 722, proline 728, and proline 734. Residues glutamine 724–proline 743 show a composition bias toward low complexity. At lysine 746 the chain carries 5-hydroxylysine. Low complexity predominate over residues leucine 749–proline 758. 4-hydroxyproline is present on residues proline 752, proline 758, proline 764, proline 767, and proline 773. 5-hydroxylysine is present on lysine 776. 4-hydroxyproline is present on residues proline 782 and proline 791. A 5-hydroxylysine mark is found at lysine 797, lysine 806, lysine 809, and lysine 812. Position 818 is a 4-hydroxyproline (proline 818). A 5-hydroxylysine modification is found at lysine 821. Position 836 is a 4-hydroxyproline (proline 836). A compositionally biased stretch (basic and acidic residues) spans arginine 839 to lysine 848. 2 positions are modified to 5-hydroxylysine: lysine 848 and lysine 866. A 4-hydroxyproline mark is found at proline 872, proline 875, and proline 878. The residue at position 884 (lysine 884) is a 5-hydroxylysine. 4-hydroxyproline occurs at positions 890 and 893. The residue at position 899 (lysine 899) is a 5-hydroxylysine. 4-hydroxyproline is present on residues proline 905 and proline 908. Positions proline 910–proline 919 are enriched in low complexity. 4-hydroxyproline is present on residues proline 932 and proline 947. Low complexity-rich tracts occupy residues lysine 973–threonine 992 and valine 1001–methionine 1013. 4 positions are modified to 4-hydroxyproline: proline 1019, proline 1022, proline 1025, and proline 1031. A compositionally biased stretch (low complexity) spans serine 1090–proline 1106. Positions arginine 1108–proline 1117 are enriched in pro residues. 4-hydroxyproline is present on residues proline 1223 and proline 1226. The span at proline 1261–proline 1270 shows a compositional bias: low complexity. Residues glycine 1296 to glycine 1305 show a composition bias toward gly residues. Composition is skewed to pro residues over residues threonine 1382–alanine 1400 and serine 1456–leucine 1471. A 4-hydroxyproline mark is found at proline 1469 and proline 1472. Residues proline 1487 to proline 1496 are compositionally biased toward low complexity. Residues proline 1528–proline 1543 are compositionally biased toward pro residues. Positions lysine 1544 to lysine 1556 are enriched in low complexity. A nonhelical region region spans residues glutamate 1573–alanine 1607. Sulfotyrosine is present on residues tyrosine 1603 and tyrosine 1606. The Fibrillar collagen NC1 domain maps to glutamate 1611–leucine 1839.

It belongs to the fibrillar collagen family. Trimers of two alpha 1(V) and one alpha 2(V) chains in most tissues and trimers of one alpha 1(V), one alpha 2(V), and one alpha 3(V) chains in placenta. Interacts with CSPG4. In terms of processing, hydroxylation on proline residues within the sequence motif, GXPG, is most likely to be 4-hydroxy as this fits the requirement for 4-hydroxylation in vertebrates. Sulfated on 40% of tyrosines. In terms of tissue distribution, ubiquitously expressed.

The protein resides in the secreted. It is found in the extracellular space. The protein localises to the extracellular matrix. Type V collagen is a member of group I collagen (fibrillar forming collagen). It is a minor connective tissue component of nearly ubiquitous distribution. Type V collagen binds to DNA, heparan sulfate, thrombospondin, heparin, and insulin. The polypeptide is Collagen alpha-1(V) chain (COL5A1) (Cricetulus longicaudatus (Long-tailed dwarf hamster)).